Reading from the N-terminus, the 336-residue chain is Glucokinase (336 aa).

13–18 (ADVGGT) contributes to the ATP binding site.

Belongs to the bacterial glucokinase family.

The protein localises to the cytoplasm. It carries out the reaction D-glucose + ATP = D-glucose 6-phosphate + ADP + H(+). The sequence is that of Glucokinase from Cupriavidus metallidurans (strain ATCC 43123 / DSM 2839 / NBRC 102507 / CH34) (Ralstonia metallidurans).